The following is a 270-amino-acid chain: Aliphatic sulfonates import ATP-binding protein SsuB 3 (270 aa).

Positions 17–238 (LAVQNLKKAF…ARGSHRLAAL (222 aa)) constitute an ABC transporter domain. 49-56 (GRSGCGKS) is an ATP binding site.

It belongs to the ABC transporter superfamily. Aliphatic sulfonates importer (TC 3.A.1.17.2) family. The complex is composed of two ATP-binding proteins (SsuB), two transmembrane proteins (SsuC) and a solute-binding protein (SsuA).

It localises to the cell inner membrane. It catalyses the reaction ATP + H2O + aliphatic sulfonate-[sulfonate-binding protein]Side 1 = ADP + phosphate + aliphatic sulfonateSide 2 + [sulfonate-binding protein]Side 1.. Functionally, part of the ABC transporter complex SsuABC involved in aliphatic sulfonates import. Responsible for energy coupling to the transport system. The polypeptide is Aliphatic sulfonates import ATP-binding protein SsuB 3 (Pseudomonas syringae pv. tomato (strain ATCC BAA-871 / DC3000)).